The chain runs to 469 residues: MAQTLYDKLWNTHVVHTEDDGTALLYIDRQLLHEVTSPQAFEGLNVAHRPVWRISANLAVSDHNVPTTDRSHGIADPVSKLQVDTLDANCDAFGITQFKMNDLRQGIVHIIGPEQGATLPGMTIVCGDSHTSTHGAFGALAHGIGTSEVEHVLATQTLLQKKSKNMLVKVEGTLPRGCTAKDIVLAIIGKIGTAGGTGYAIEFGGSTIRALTMEGRMTVCNMAIEAGARAGMVAVDDTTIDYLKGRPFVPTGAEWDQAVEYWREFKSDEGAQFDRVVELNAAEIVPQVTWGTSPEMVTSIDARVPDPEREKDPVKREAMERALAYMALEPNTPMESINVDKIFIGSCTNARIEDIRAAAYVVKKLNRRIAPNVRLAMVVPGSGLVKAQAEREGLDKVFTDAGFEWREPGCSMCLAMNADRLEPGERCASTSNRNFEGRQGAGGRTHLVSPAMAAAAAIEGHFVDIRKLG.

Residues Cys347, Cys410, and Cys413 each contribute to the [4Fe-4S] cluster site.

Belongs to the aconitase/IPM isomerase family. LeuC type 1 subfamily. Heterodimer of LeuC and LeuD. It depends on [4Fe-4S] cluster as a cofactor.

The enzyme catalyses (2R,3S)-3-isopropylmalate = (2S)-2-isopropylmalate. The protein operates within amino-acid biosynthesis; L-leucine biosynthesis; L-leucine from 3-methyl-2-oxobutanoate: step 2/4. Functionally, catalyzes the isomerization between 2-isopropylmalate and 3-isopropylmalate, via the formation of 2-isopropylmaleate. The protein is 3-isopropylmalate dehydratase large subunit of Burkholderia vietnamiensis (strain G4 / LMG 22486) (Burkholderia cepacia (strain R1808)).